A 56-amino-acid polypeptide reads, in one-letter code: Endoregulin (56 aa).

Residues 25 to 45 (LTVIGLFTSTFLLFVLFAVVF) form a helical membrane-spanning segment.

As to quaternary structure, homooligomer. Can also form heterooligomers with other sarcoplasmic/endoplasmic reticulum calcium ATPase (SERCA) regulators ARLN, PLN, SLN and STRIT1/DWORF. Monomer. Interacts as a monomer with ATP2A2/SERCA2; the interaction results in inhibition of ATP2A2 Ca(2+) affinity. As to expression, largely expressed in non-muscle tissues with the exception of weak expression in body wall muscles at 14.5 dpc. Expressed in epithelial cells of the trachea, bronchus, lung, intestine, pancreas, and liver.

The protein localises to the endoplasmic reticulum membrane. Functionally, inhibits the activity of the calcium ATPases ATP2A2/SERCA2 and ATP2A3/SERCA3 by decreasing their apparent affinity for Ca(2+). The polypeptide is Endoregulin (Erln) (Mus musculus (Mouse)).